A 123-amino-acid polypeptide reads, in one-letter code: S-adenosylmethionine decarboxylase proenzyme 2 (123 aa).

Ser65 acts as the Schiff-base intermediate with substrate; via pyruvic acid in catalysis. Ser65 bears the Pyruvic acid (Ser); by autocatalysis mark. His70 functions as the Proton acceptor; for processing activity in the catalytic mechanism. Cys85 serves as the catalytic Proton donor; for catalytic activity.

Belongs to the prokaryotic AdoMetDC family. Type 1 subfamily. In terms of assembly, heterotetramer of two alpha and two beta chains arranged as a dimer of alpha/beta heterodimers. It depends on pyruvate as a cofactor. In terms of processing, is synthesized initially as an inactive proenzyme. Formation of the active enzyme involves a self-maturation process in which the active site pyruvoyl group is generated from an internal serine residue via an autocatalytic post-translational modification. Two non-identical subunits are generated from the proenzyme in this reaction, and the pyruvate is formed at the N-terminus of the alpha chain, which is derived from the carboxyl end of the proenzyme. The post-translation cleavage follows an unusual pathway, termed non-hydrolytic serinolysis, in which the side chain hydroxyl group of the serine supplies its oxygen atom to form the C-terminus of the beta chain, while the remainder of the serine residue undergoes an oxidative deamination to produce ammonia and the pyruvoyl group blocking the N-terminus of the alpha chain.

The enzyme catalyses S-adenosyl-L-methionine + H(+) = S-adenosyl 3-(methylsulfanyl)propylamine + CO2. Its pathway is amine and polyamine biosynthesis; S-adenosylmethioninamine biosynthesis; S-adenosylmethioninamine from S-adenosyl-L-methionine: step 1/1. Catalyzes the decarboxylation of S-adenosylmethionine to S-adenosylmethioninamine (dcAdoMet), the propylamine donor required for the synthesis of the polyamines spermine and spermidine from the diamine putrescine. This chain is S-adenosylmethionine decarboxylase proenzyme 2, found in Bacillus cereus (strain ATCC 14579 / DSM 31 / CCUG 7414 / JCM 2152 / NBRC 15305 / NCIMB 9373 / NCTC 2599 / NRRL B-3711).